The following is a 415-amino-acid chain: Zona pellucida-like domain-containing protein 1 (415 aa).

An N-terminal signal peptide occupies residues 1–19 (MERVWLLFLLAIRVSPGSA). The Extracellular portion of the chain corresponds to 20–373 (QFNSYNCDAN…PFQLNAVTSS (354 aa)). The region spanning 43 to 320 (YCGVQAITMK…PICGNRKRRD (278 aa)) is the ZP domain. Disulfide bonds link cysteine 44–cysteine 155 and cysteine 79–cysteine 104. The N-linked (GlcNAc...) asparagine glycan is linked to asparagine 164. 2 disulfide bridges follow: cysteine 235-cysteine 296 and cysteine 255-cysteine 313. Residues 374–394 (LISGMVILGVLCFSLLLCSLA) form a helical membrane-spanning segment. Residues 395 to 415 (LLHRKGSTSLVLNGVRNPVFE) are Cytoplasmic-facing.

Post-translationally, proteolytically cleaved before the transmembrane segment to yield the secreted form found in the extracellular matrix of the cupula.

It is found in the cytoplasmic vesicle membrane. The protein localises to the secreted. It localises to the extracellular space. Its subcellular location is the extracellular matrix. In terms of biological role, glycoprotein which is a component of the gelatinous extracellular matrix in the cupulae of the vestibular organ. This Mus musculus (Mouse) protein is Zona pellucida-like domain-containing protein 1 (Zpld1).